Here is a 150-residue protein sequence, read N- to C-terminus: MSEARLMARDVIKTVPHDQVPQPPVASETPSMKEPVRDVDLMECVEGRNQVALRLACIGDEMDLCLRSPRLVQLPGIAIHRLAVTYSRTGVRGIFRSLIRSLTNLRENIWSWRVLTPGAWVSPDQDPGQLFPMVLLVFLLLGGAWYLQLQ.

A BH3 motif is present at residues valine 51–cysteine 65. Residues proline 127–leucine 147 form a helical membrane-spanning segment. The tract at residues proline 127–glutamine 148 is leucine-zipper.

In terms of assembly, interacts with RHBDL4/RHBDD1. Interacts with BCL2L10/BCL-B. In terms of processing, proteolytically cleaved by RHBDL4/RHBDD1. RHBDL4/RHBDD1-induced cleavage is a necessary step prior its degradation by the proteosome-dependent mechanism. Ubiquitinated by the ECS(ASB11) complex in response to endoplasmic reticulum stress, leading to substrate recognition by the segregase p97/VCP and degradation by the proteasome. Expressed in testis, kidney, liver, lung and heart.

It is found in the endomembrane system. The protein resides in the mitochondrion membrane. Its function is as follows. Accelerates programmed cell death. Binding to the apoptosis repressors Bcl-X(L), BHRF1 or Bcl-2 suppresses this death-promoting activity. The protein is Bcl-2-interacting killer (Bik) of Mus musculus (Mouse).